The sequence spans 890 residues: Translation initiation factor IF-2 (890 aa).

The disordered stretch occupies residues 45-304 (LIDHLNQKNS…LQQGFQKPAQ (260 aa)). Positions 67–81 (STLNIPGTGGKSKSV) are enriched in polar residues. Residues 92–217 (VKRDPQEAER…RMAEENKWTD (126 aa)) show a composition bias toward basic and acidic residues. Basic residues predominate over residues 252–266 (GRGRNAKAARPKKGN). Basic and acidic residues predominate over residues 267 to 280 (KHAESKADREEARA). One can recognise a tr-type G domain in the interval 389–558 (PRAPVVTIMG…LLQAEVLELK (170 aa)). Residues 398-405 (GHVDHGKT) form a G1 region. Residue 398-405 (GHVDHGKT) coordinates GTP. The segment at 423–427 (GITQH) is G2. The tract at residues 444–447 (DTPG) is G3. GTP contacts are provided by residues 444 to 448 (DTPGH) and 498 to 501 (NKID). The interval 498–501 (NKID) is G4. The tract at residues 534–536 (SAK) is G5. An N6-acetyllysine modification is found at Lys-808.

The protein belongs to the TRAFAC class translation factor GTPase superfamily. Classic translation factor GTPase family. IF-2 subfamily.

It localises to the cytoplasm. One of the essential components for the initiation of protein synthesis. Protects formylmethionyl-tRNA from spontaneous hydrolysis and promotes its binding to the 30S ribosomal subunits. Also involved in the hydrolysis of GTP during the formation of the 70S ribosomal complex. This chain is Translation initiation factor IF-2, found in Shigella sonnei (strain Ss046).